Consider the following 163-residue polypeptide: MALNLQDKQAIVAEVNEAAKGALSAVIADSRGVTVDKMTELRKAAREAGVSMRVVRNTLLRRAVEGTDFECLTDTFVGPTLIAFSNEHPGAAARLFKDFAKANDKFEIKGAAFEGKIQNVEFLATLPTYEEAIARLMGTMKEAAAGKLARTLAAYRDKLQEAA.

It belongs to the universal ribosomal protein uL10 family. Part of the ribosomal stalk of the 50S ribosomal subunit. The N-terminus interacts with L11 and the large rRNA to form the base of the stalk. The C-terminus forms an elongated spine to which L12 dimers bind in a sequential fashion forming a multimeric L10(L12)X complex.

Its function is as follows. Forms part of the ribosomal stalk, playing a central role in the interaction of the ribosome with GTP-bound translation factors. This Histophilus somni (strain 2336) (Haemophilus somnus) protein is Large ribosomal subunit protein uL10.